A 677-amino-acid chain; its full sequence is Histidine ammonia-lyase (677 aa).

Positions 269 to 271 form a cross-link, 5-imidazolinone (Cys-Gly); it reads CSG. Ser270 bears the 2,3-didehydroalanine (Ser) mark.

This sequence belongs to the PAL/histidase family. In terms of processing, contains an active site 4-methylidene-imidazol-5-one (MIO), which is formed autocatalytically by cyclization and dehydration of residues Cys-Ser-Gly.

The enzyme catalyses L-histidine = trans-urocanate + NH4(+). The protein operates within amino-acid degradation; L-histidine degradation into L-glutamate; N-formimidoyl-L-glutamate from L-histidine: step 1/3. The protein is Histidine ammonia-lyase of Caenorhabditis elegans.